We begin with the raw amino-acid sequence, 114 residues long: Probable 4-amino-4-deoxy-L-arabinose-phosphoundecaprenol flippase subunit ArnE (114 aa).

2 helical membrane passes run 41–61 and 68–88; these read GWLW…LLVL and VAYP…HFVF. Residues 43–112 form the EamA domain; that stretch reads LWLALFSLGL…VIGGVLLLSR (70 aa).

Belongs to the ArnE family. As to quaternary structure, heterodimer of ArnE and ArnF.

The protein resides in the cell inner membrane. It functions in the pathway bacterial outer membrane biogenesis; lipopolysaccharide biosynthesis. In terms of biological role, translocates 4-amino-4-deoxy-L-arabinose-phosphoundecaprenol (alpha-L-Ara4N-phosphoundecaprenol) from the cytoplasmic to the periplasmic side of the inner membrane. In Pseudomonas fluorescens (strain ATCC BAA-477 / NRRL B-23932 / Pf-5), this protein is Probable 4-amino-4-deoxy-L-arabinose-phosphoundecaprenol flippase subunit ArnE.